Consider the following 462-residue polypeptide: Probable serine/threonine-protein kinase DDB_G0286841 (462 aa).

The Protein kinase domain occupies 64 to 358 (FNFLKVISKG…VDEVKCHPFF (295 aa)). ATP is bound by residues 70–78 (ISKGGFGKV) and Lys93. The active-site Proton acceptor is Asp188. In terms of domain architecture, AGC-kinase C-terminal spans 359-462 (SEINWKIYED…LFIDFDFPTY (104 aa)). Positions 414–439 (NIYKNNNNNNNNNNNNNNNNNNNNNN) are enriched in low complexity. The disordered stretch occupies residues 414-447 (NIYKNNNNNNNNNNNNNNNNNNNNNNDDNDDENN).

It belongs to the protein kinase superfamily. AGC Ser/Thr protein kinase family.

The enzyme catalyses L-seryl-[protein] + ATP = O-phospho-L-seryl-[protein] + ADP + H(+). The catalysed reaction is L-threonyl-[protein] + ATP = O-phospho-L-threonyl-[protein] + ADP + H(+). The protein is Probable serine/threonine-protein kinase DDB_G0286841 of Dictyostelium discoideum (Social amoeba).